Reading from the N-terminus, the 227-residue chain is Urease accessory protein UreF (227 aa).

It belongs to the UreF family. In terms of assembly, ureD, UreF and UreG form a complex that acts as a GTP-hydrolysis-dependent molecular chaperone, activating the urease apoprotein by helping to assemble the nickel containing metallocenter of UreC. The UreE protein probably delivers the nickel.

The protein localises to the cytoplasm. In terms of biological role, required for maturation of urease via the functional incorporation of the urease nickel metallocenter. This Blochmanniella floridana protein is Urease accessory protein UreF.